The following is a 305-amino-acid chain: Tyrosine recombinase XerC (305 aa).

The 94-residue stretch at 1 to 94 (MSSVDEFLTY…ACRSYYAWLL (94 aa)) folds into the Core-binding (CB) domain. Residues 115–292 (KLPQVLDADE…DFQHLAKVYD (178 aa)) form the Tyr recombinase domain. Catalysis depends on residues Arg-154, Lys-178, His-244, Arg-247, and His-270. The O-(3'-phospho-DNA)-tyrosine intermediate role is filled by Tyr-279.

The protein belongs to the 'phage' integrase family. XerC subfamily. In terms of assembly, forms a cyclic heterotetrameric complex composed of two molecules of XerC and two molecules of XerD.

The protein localises to the cytoplasm. Functionally, site-specific tyrosine recombinase, which acts by catalyzing the cutting and rejoining of the recombining DNA molecules. The XerC-XerD complex is essential to convert dimers of the bacterial chromosome into monomers to permit their segregation at cell division. It also contributes to the segregational stability of plasmids. The sequence is that of Tyrosine recombinase XerC from Xanthomonas axonopodis pv. citri (strain 306).